We begin with the raw amino-acid sequence, 485 residues long: MFS-type transporter phm3 (485 aa).

The tract at residues 1 to 22 (MSLQDPTKEHNNTSPSPKDEKT) is disordered. Helical transmembrane passes span 55-75 (FTLY…LLVA), 83-103 (IVAS…PFLL), 113-133 (LWLY…CALS), 144-164 (FICG…IADL), 175-195 (ALFG…GGFV), 203-223 (WTFY…AVIM), 278-298 (PIVL…YLLF), 317-337 (GLAF…FAIL), 357-377 (LVLM…YGWS), 384-404 (WIVP…ILMP), 421-441 (ALAV…LAGP), and 449-469 (LGWG…VPFV).

The protein belongs to the major facilitator superfamily.

Its subcellular location is the cell membrane. MFS-type transporter; part of the gene cluster that mediates the biosynthesis of the trans-fused decalin-containing tetramic acid phomasetin. This chain is MFS-type transporter phm3, found in Pyrenochaetopsis sp.